A 513-amino-acid chain; its full sequence is Histidine ammonia-lyase (513 aa).

Positions 142–144 (ASG) form a cross-link, 5-imidazolinone (Ala-Gly). Ser143 is subject to 2,3-didehydroalanine (Ser).

It belongs to the PAL/histidase family. Post-translationally, contains an active site 4-methylidene-imidazol-5-one (MIO), which is formed autocatalytically by cyclization and dehydration of residues Ala-Ser-Gly.

It localises to the cytoplasm. The enzyme catalyses L-histidine = trans-urocanate + NH4(+). The protein operates within amino-acid degradation; L-histidine degradation into L-glutamate; N-formimidoyl-L-glutamate from L-histidine: step 1/3. The chain is Histidine ammonia-lyase from Hyphomonas neptunium (strain ATCC 15444).